Consider the following 281-residue polypeptide: 2-dehydro-3-deoxyphosphooctonate aldolase (281 aa).

Belongs to the KdsA family.

Its subcellular location is the cytoplasm. It catalyses the reaction D-arabinose 5-phosphate + phosphoenolpyruvate + H2O = 3-deoxy-alpha-D-manno-2-octulosonate-8-phosphate + phosphate. The protein operates within carbohydrate biosynthesis; 3-deoxy-D-manno-octulosonate biosynthesis; 3-deoxy-D-manno-octulosonate from D-ribulose 5-phosphate: step 2/3. It participates in bacterial outer membrane biogenesis; lipopolysaccharide biosynthesis. In Pseudomonas savastanoi pv. phaseolicola (strain 1448A / Race 6) (Pseudomonas syringae pv. phaseolicola (strain 1448A / Race 6)), this protein is 2-dehydro-3-deoxyphosphooctonate aldolase.